A 285-amino-acid polypeptide reads, in one-letter code: Secreted RxLR effector protein 106 (285 aa).

Residues 1 to 24 form the signal peptide; it reads MSVRYAGLLLAAVAVSAHINEVNS. The RxLR-dEER signature appears at 42–54; sequence RDLRSADNGNEER. Asparagine 182 and asparagine 187 each carry an N-linked (GlcNAc...) asparagine glycan. Over residues 220 to 229 the composition is skewed to basic and acidic residues; sequence IEGDKEKKGG. Residues 220–262 are disordered; that stretch reads IEGDKEKKGGPDYVEGTESRGKKRGQTEAPDLEPGLTPKQKRL. The Bipartite nuclear localization signal signature appears at 239–264; that stretch reads RGKKRGQTEAPDLEPGLTPKQKRLKR.

This sequence belongs to the RxLR effector family. Interacts with host RCD1 and SRO1 transcription co-regulators.

It is found in the secreted. Its subcellular location is the host nucleus. Functionally, secreted effector that suppresses pathogen-associated molecular pattern (PAMP)-triggered immunity (PTI) in host plants. Binds to RCD1 and SRO1 transcription co-regulators to attenuate transcriptional activation of salicylic acid (SA)-induced defense genes and alters plant growth responses to light. Suppresses SA signal transduction but not SA levels. This is Secreted RxLR effector protein 106 from Hyaloperonospora arabidopsidis (strain Emoy2) (Downy mildew agent).